The following is a 302-amino-acid chain: Aspartate carbamoyltransferase catalytic subunit (302 aa).

Residues arginine 53 and threonine 54 each coordinate carbamoyl phosphate. Lysine 82 lines the L-aspartate pocket. Carbamoyl phosphate is bound by residues arginine 103, histidine 131, and glutamine 134. Positions 164 and 223 each coordinate L-aspartate. The carbamoyl phosphate site is built by leucine 260 and proline 261.

It belongs to the aspartate/ornithine carbamoyltransferase superfamily. ATCase family. In terms of assembly, heterooligomer of catalytic and regulatory chains.

It catalyses the reaction carbamoyl phosphate + L-aspartate = N-carbamoyl-L-aspartate + phosphate + H(+). Its pathway is pyrimidine metabolism; UMP biosynthesis via de novo pathway; (S)-dihydroorotate from bicarbonate: step 2/3. In terms of biological role, catalyzes the condensation of carbamoyl phosphate and aspartate to form carbamoyl aspartate and inorganic phosphate, the committed step in the de novo pyrimidine nucleotide biosynthesis pathway. This Methanococcus maripaludis (strain C6 / ATCC BAA-1332) protein is Aspartate carbamoyltransferase catalytic subunit.